The sequence spans 295 residues: Acetylglutamate kinase (295 aa).

Residues 66 to 67 (GG), Arg88, and Asn193 contribute to the substrate site.

This sequence belongs to the acetylglutamate kinase family. ArgB subfamily.

Its subcellular location is the cytoplasm. It carries out the reaction N-acetyl-L-glutamate + ATP = N-acetyl-L-glutamyl 5-phosphate + ADP. It functions in the pathway amino-acid biosynthesis; L-arginine biosynthesis; N(2)-acetyl-L-ornithine from L-glutamate: step 2/4. In terms of biological role, catalyzes the ATP-dependent phosphorylation of N-acetyl-L-glutamate. In Allorhizobium ampelinum (strain ATCC BAA-846 / DSM 112012 / S4) (Agrobacterium vitis (strain S4)), this protein is Acetylglutamate kinase.